The chain runs to 460 residues: tRNA modification GTPase MnmE (460 aa).

3 residues coordinate (6S)-5-formyl-5,6,7,8-tetrahydrofolate: Arg-29, Glu-91, and Lys-132. One can recognise a TrmE-type G domain in the interval 227–383 (GISIALIGKT…LIDTIIKKCG (157 aa)). Asn-237 is a K(+) binding site. GTP contacts are provided by residues 237–242 (NVGKSS), 256–262 (TNIPGTT), and 281–284 (DTAG). Ser-241 is a Mg(2+) binding site. K(+)-binding residues include Thr-256, Ile-258, and Thr-261. Residue Thr-262 coordinates Mg(2+). Residue Lys-460 coordinates (6S)-5-formyl-5,6,7,8-tetrahydrofolate.

The protein belongs to the TRAFAC class TrmE-Era-EngA-EngB-Septin-like GTPase superfamily. TrmE GTPase family. Homodimer. Heterotetramer of two MnmE and two MnmG subunits. K(+) serves as cofactor.

The protein localises to the cytoplasm. In terms of biological role, exhibits a very high intrinsic GTPase hydrolysis rate. Involved in the addition of a carboxymethylaminomethyl (cmnm) group at the wobble position (U34) of certain tRNAs, forming tRNA-cmnm(5)s(2)U34. This is tRNA modification GTPase MnmE from Prochlorococcus marinus (strain MIT 9301).